We begin with the raw amino-acid sequence, 62 residues long: Teretoxin Tan1.1 (62 aa).

The signal sequence occupies residues 1-21; sequence MSCFPVLFVMMLLVSQSVWAF. The propeptide occupies 22-38; that stretch reads PGPETRDGSVQDAESRR.

It belongs to the teretoxin A (TA) superfamily. Contains 2 disulfide bonds. As to expression, expressed by the venom duct.

It is found in the secreted. The polypeptide is Teretoxin Tan1.1 (Terebra anilis (Auger snail)).